The following is a 320-amino-acid chain: Cytochrome f (320 aa).

The signal sequence occupies residues 1-35; that stretch reads MQTRNTFSWIKEEITRSISVSLMIYIITGASISNA. Residues tyrosine 36, cysteine 56, cysteine 59, and histidine 60 each coordinate heme. Residues 286–306 form a helical membrane-spanning segment; it reads VQGLLFFLASIVFAQIFLVLK.

Belongs to the cytochrome f family. As to quaternary structure, the 4 large subunits of the cytochrome b6-f complex are cytochrome b6, subunit IV (17 kDa polypeptide, petD), cytochrome f and the Rieske protein, while the 4 small subunits are PetG, PetL, PetM and PetN. The complex functions as a dimer. Heme is required as a cofactor.

It localises to the plastid. The protein resides in the chloroplast thylakoid membrane. Component of the cytochrome b6-f complex, which mediates electron transfer between photosystem II (PSII) and photosystem I (PSI), cyclic electron flow around PSI, and state transitions. This chain is Cytochrome f, found in Gossypium hirsutum (Upland cotton).